Reading from the N-terminus, the 373-residue chain is COP9 signalosome complex subunit 5 (373 aa).

Residues 66–201 (CLISRLATTK…IGAFRTLPSK (136 aa)) enclose the MPN domain. Zn(2+) is bound by residues His-147, His-149, and Asp-160. A JAMM motif motif is present at residues 147–160 (HSHPGYGCWLSNID). The interval 289–325 (FTHERSNSISSTSSLTTRHTTDVEMDDQESAQSSLDI) is disordered. Residues 295 to 306 (NSISSTSSLTTR) are compositionally biased toward low complexity.

It belongs to the peptidase M67A family. CSN5 subfamily. In terms of assembly, component of the COP9 signalosome (CSN) complex.

It is found in the cytoplasm. The protein localises to the nucleus. In terms of biological role, catalytic Component of the COP9 signalosome (CSN) complex that acts as an regulator of the ubiquitin (Ubl) conjugation pathway by mediating the deneddylation of the cullin subunit of SCF-type E3 ubiquitin-protein ligase complexes. The CNS complex is involved in the regulation of the mating pheromone response. This chain is COP9 signalosome complex subunit 5 (RRI1), found in Kluyveromyces lactis (strain ATCC 8585 / CBS 2359 / DSM 70799 / NBRC 1267 / NRRL Y-1140 / WM37) (Yeast).